Consider the following 55-residue polypeptide: Large ribosomal subunit protein bL33 (55 aa).

It belongs to the bacterial ribosomal protein bL33 family.

In Hyphomonas neptunium (strain ATCC 15444), this protein is Large ribosomal subunit protein bL33.